We begin with the raw amino-acid sequence, 59 residues long: UPF0434 protein VV1_2087 (59 aa).

Belongs to the UPF0434 family.

The chain is UPF0434 protein VV1_2087 from Vibrio vulnificus (strain CMCP6).